We begin with the raw amino-acid sequence, 298 residues long: Tyrosine recombinase XerC (298 aa).

The Core-binding (CB) domain maps to 2-88 (TDLHTDVERY…ALRSFFDWLV (87 aa)). In terms of domain architecture, Tyr recombinase spans 109 to 288 (HLPKNIDVDD…DFQHLASVYD (180 aa)). Residues Arg-148, Lys-172, His-240, Arg-243, and His-266 contribute to the active site. The active-site O-(3'-phospho-DNA)-tyrosine intermediate is the Tyr-275.

Belongs to the 'phage' integrase family. XerC subfamily. As to quaternary structure, forms a cyclic heterotetrameric complex composed of two molecules of XerC and two molecules of XerD, in which XerC interacts with XerD via its C-terminal region, XerD interacts with XerC via its C-terminal region and so on.

Its subcellular location is the cytoplasm. With respect to regulation, ftsK may regulate the catalytic switch between XerC and XerD in the heterotetrameric complex during the two steps of the recombination process. Its function is as follows. Site-specific tyrosine recombinase, which acts by catalyzing the cutting and rejoining of the recombining DNA molecules. Binds cooperatively to specific DNA consensus sequences that are separated from XerD binding sites by a short central region, forming the heterotetrameric XerC-XerD complex that recombines DNA substrates. The complex is essential to convert dimers of the bacterial chromosome into monomers to permit their segregation at cell division. It also contributes to the segregational stability of plasmids. In the complex XerC specifically exchanges the top DNA strands. The sequence is that of Tyrosine recombinase XerC from Shigella flexneri serotype 5b (strain 8401).